Here is a 37-residue protein sequence, read N- to C-terminus: Cytochrome b6-f complex subunit 5 (37 aa).

Residues 5–25 traverse the membrane as a helical segment; that stretch reads LLSGIVLGLVPITLAGLFVTA.

This sequence belongs to the PetG family. As to quaternary structure, the 4 large subunits of the cytochrome b6-f complex are cytochrome b6, subunit IV (17 kDa polypeptide, PetD), cytochrome f and the Rieske protein, while the 4 small subunits are PetG, PetL, PetM and PetN. The complex functions as a dimer.

The protein resides in the plastid. The protein localises to the chloroplast thylakoid membrane. Component of the cytochrome b6-f complex, which mediates electron transfer between photosystem II (PSII) and photosystem I (PSI), cyclic electron flow around PSI, and state transitions. PetG is required for either the stability or assembly of the cytochrome b6-f complex. This is Cytochrome b6-f complex subunit 5 from Gnetum parvifolium (Small-leaved jointfir).